A 533-amino-acid chain; its full sequence is Decreased expression in renal and prostate cancer protein (533 aa).

A compositionally biased stretch (basic and acidic residues) spans 1-12; that stretch reads MKEPRIFPRERP. 4 disordered regions span residues 1-31, 67-164, 177-259, and 299-350; these read MKEPRIFPRERPTPWTRAPLPPRGRLDGGPV, QNPS…PDPR, MRAG…RAGG, and ASGN…PNSA. Serine 160 carries the post-translational modification Phosphoserine. A compositionally biased stretch (polar residues) spans 299–309; the sequence is ASGNMGTNPPT. Asymmetric dimethylarginine is present on arginine 368. Omega-N-methylarginine is present on arginine 396. Serine 432 bears the Phosphoserine mark.

The protein belongs to the DERPC family.

It localises to the nucleus. Functionally, potential tumor suppressor. The polypeptide is Decreased expression in renal and prostate cancer protein (Mus musculus (Mouse)).